The primary structure comprises 80 residues: Putative membrane protein insertion efficiency factor (80 aa).

The disordered stretch occupies residues 61–80; sequence KTGKDPIPDHFSLKRNQEGE. Positions 62 to 80 are enriched in basic and acidic residues; that stretch reads TGKDPIPDHFSLKRNQEGE.

It belongs to the UPF0161 family.

The protein localises to the cell membrane. Its function is as follows. Could be involved in insertion of integral membrane proteins into the membrane. The sequence is that of Putative membrane protein insertion efficiency factor from Streptococcus pneumoniae (strain CGSP14).